Reading from the N-terminus, the 263-residue chain is Purine nucleoside phosphorylase SAR1163 (263 aa).

Zn(2+) is bound by residues histidine 79, cysteine 124, and histidine 141.

The protein belongs to the purine nucleoside phosphorylase YfiH/LACC1 family. In terms of assembly, homodimer. Requires Cu(2+) as cofactor. It depends on Zn(2+) as a cofactor.

It carries out the reaction adenosine + phosphate = alpha-D-ribose 1-phosphate + adenine. It catalyses the reaction S-methyl-5'-thioadenosine + phosphate = 5-(methylsulfanyl)-alpha-D-ribose 1-phosphate + adenine. The enzyme catalyses inosine + phosphate = alpha-D-ribose 1-phosphate + hypoxanthine. The catalysed reaction is adenosine + H2O + H(+) = inosine + NH4(+). Its function is as follows. Purine nucleoside enzyme that catalyzes the phosphorolysis of adenosine and inosine nucleosides, yielding D-ribose 1-phosphate and the respective free bases, adenine and hypoxanthine. Also catalyzes the phosphorolysis of S-methyl-5'-thioadenosine into adenine and S-methyl-5-thio-alpha-D-ribose 1-phosphate. Also has adenosine deaminase activity. In Staphylococcus aureus (strain MRSA252), this protein is Purine nucleoside phosphorylase SAR1163.